We begin with the raw amino-acid sequence, 202 residues long: uncharacterized protein (202 aa).

This is an uncharacterized protein from Saccharomyces cerevisiae (strain ATCC 204508 / S288c) (Baker's yeast).